The sequence spans 209 residues: MIFPIFFTFFLLLSTSHASVQDFCVADYKAPDGPAGYSCKKPAIVTVNDFVYSGLGIAGNTTNIFKAAVTPAFAAQFPGVNGLGISLARLDLGPGGVVPFHTHPGASEVLLVVQGTIIAGFVASDNTPYLKTLKKGDIIVFPQGLLHFQVNGGDTPAIAFPSFSSPSPGLQIVDFALFKNDLATELIAQTTLLDAPQIKKLKGVLGGTN.

An N-terminal signal peptide occupies residues 1-18 (MIFPIFFTFFLLLSTSHA). A disulfide bridge links Cys24 with Cys39. The region spanning 53-199 (SGLGIAGNTT…TTLLDAPQIK (147 aa)) is the Cupin type-1 domain. N-linked (GlcNAc...) asparagine glycosylation is present at Asn60. The Mn(2+) site is built by His101, His103, Glu108, and His147.

The protein belongs to the germin family. In terms of assembly, interacts with ABP20.

Its subcellular location is the secreted. The protein localises to the extracellular space. It is found in the apoplast. The protein resides in the cell wall. Functionally, probable receptor for the plant growth-promoting hormone auxin. The sequence is that of Auxin-binding protein ABP19b (ABP19B) from Prunus persica (Peach).